The following is a 476-amino-acid chain: Glutathione synthetase (476 aa).

Arg117 contributes to the substrate binding site. Residue Glu137 coordinates ATP. Positions 137 and 139 each coordinate Mg(2+). Substrate is bound by residues 141 to 144 (ISSS), 211 to 213 (ERN), Gln217, and 267 to 270 (RAGY). ATP contacts are provided by residues Lys308, 367-376 (KPQREGGGNN), Tyr378, 400-403 (MDKI), and Glu426. Glu371 contributes to the Mg(2+) binding site. A substrate-binding site is contributed by Arg452. Lys454 and Glu460 together coordinate ATP. A substrate-binding site is contributed by 463-464 (VA).

The protein belongs to the eukaryotic GSH synthase family. Homodimer. The cofactor is Mg(2+).

It catalyses the reaction gamma-L-glutamyl-L-cysteine + glycine + ATP = glutathione + ADP + phosphate + H(+). Its pathway is sulfur metabolism; glutathione biosynthesis; glutathione from L-cysteine and L-glutamate: step 2/2. This is Glutathione synthetase (gshB) from Dictyostelium discoideum (Social amoeba).